A 444-amino-acid chain; its full sequence is Tol-Pal system protein TolB (444 aa).

Residues M1–A19 form the signal peptide.

The protein belongs to the TolB family. The Tol-Pal system is composed of five core proteins: the inner membrane proteins TolA, TolQ and TolR, the periplasmic protein TolB and the outer membrane protein Pal. They form a network linking the inner and outer membranes and the peptidoglycan layer.

The protein resides in the periplasm. Its function is as follows. Part of the Tol-Pal system, which plays a role in outer membrane invagination during cell division and is important for maintaining outer membrane integrity. The polypeptide is Tol-Pal system protein TolB (Rickettsia massiliae (strain Mtu5)).